The following is a 548-amino-acid chain: Probable sucrose-6-phosphate hydrolase (548 aa).

Substrate contacts are provided by residues 105 to 108 (LLND), Q124, 167 to 168 (FS), 228 to 229 (RD), and E283. Residue D108 is part of the active site.

Belongs to the glycosyl hydrolase 32 family.

It localises to the cytoplasm. It carries out the reaction Hydrolysis of terminal non-reducing beta-D-fructofuranoside residues in beta-D-fructofuranosides.. It functions in the pathway glycan biosynthesis; sucrose metabolism. Its function is as follows. Enables the bacterium to metabolize sucrose as a sole carbon source. This chain is Probable sucrose-6-phosphate hydrolase, found in Vibrio cholerae serotype O1 (strain ATCC 39315 / El Tor Inaba N16961).